Reading from the N-terminus, the 448-residue chain is N-succinylarginine dihydrolase (448 aa).

Residues 19–28 (AGLSYGNVAS), N110, and 137–138 (HR) contribute to the substrate site. The active site involves E174. R214 is a binding site for substrate. H250 is an active-site residue. Substrate is bound by residues D252 and N364. Residue C370 is the Nucleophile of the active site.

This sequence belongs to the succinylarginine dihydrolase family. As to quaternary structure, homodimer.

It catalyses the reaction N(2)-succinyl-L-arginine + 2 H2O + 2 H(+) = N(2)-succinyl-L-ornithine + 2 NH4(+) + CO2. It functions in the pathway amino-acid degradation; L-arginine degradation via AST pathway; L-glutamate and succinate from L-arginine: step 2/5. Catalyzes the hydrolysis of N(2)-succinylarginine into N(2)-succinylornithine, ammonia and CO(2). The protein is N-succinylarginine dihydrolase of Pseudoalteromonas translucida (strain TAC 125).